The chain runs to 303 residues: N-acetyl-D-glucosamine kinase (303 aa).

ATP contacts are provided by residues G4–K11 and G133–L140. 4 residues coordinate Zn(2+): H157, C177, C179, and C184.

Belongs to the ROK (NagC/XylR) family. NagK subfamily.

The enzyme catalyses N-acetyl-D-glucosamine + ATP = N-acetyl-D-glucosamine 6-phosphate + ADP + H(+). It functions in the pathway cell wall biogenesis; peptidoglycan recycling. Its function is as follows. Catalyzes the phosphorylation of N-acetyl-D-glucosamine (GlcNAc) derived from cell-wall degradation, yielding GlcNAc-6-P. The polypeptide is N-acetyl-D-glucosamine kinase (Salmonella newport (strain SL254)).